We begin with the raw amino-acid sequence, 449 residues long: MPHIKFDYSKVLDKFVAPHEVEYMQSQVTAADELIRKGTGAGSDFLGWLDLPENYDREEFDRILKAAEQIKSDSDVLVVIGIGGSYLGAKAAIDFLNHHFANLQTKEERKAPQILYAGNSISSTYLADLVEYVADKDFSVNVISKSGTTTEPAIAFRVFKELLVKKYGQEEANKRIYATTDRQKGAVKVEADANGWETFVVPDDIGGRFSVLTAVGLLPIAASGADIKALMEGANAARKDYTSDKLSENEAYQYAAVRNILYRKGYATEILVNYEPSLQYFSEWWKQLAGESEGKDQKGIYPTSANFSTDLHSLGQFIQEGTRIMFETVVRVDKPRKNVIIPTLEEDLDGLGYLQGKDVDFVNKKATDGVLLAHTDGDVPNMYVTLPEQDAFTLGYTIYFFELAIALSGYLNAINPFDQPGVEAYKRNMFALLGKPGFEELSKELNARL.

Glutamate 291 (proton donor) is an active-site residue. Active-site residues include histidine 312 and lysine 426.

The protein belongs to the GPI family.

Its subcellular location is the cytoplasm. It catalyses the reaction alpha-D-glucose 6-phosphate = beta-D-fructose 6-phosphate. The protein operates within carbohydrate biosynthesis; gluconeogenesis. It participates in carbohydrate degradation; glycolysis; D-glyceraldehyde 3-phosphate and glycerone phosphate from D-glucose: step 2/4. Functionally, catalyzes the reversible isomerization of glucose-6-phosphate to fructose-6-phosphate. This Streptococcus gordonii (strain Challis / ATCC 35105 / BCRC 15272 / CH1 / DL1 / V288) protein is Glucose-6-phosphate isomerase.